We begin with the raw amino-acid sequence, 352 residues long: MPYSADLDIRVTDSSLRDGSHAKRHQFTVEHVRSIVGALDAAGVPVIEVTHGDGLGGSSFNYGFSHTPEQELIKAAVETAERARIAFLMLPGLGVQSDIREAADNGASICRIATHCTEADISVQHFGLARELGLETVGFLMMSHSQPPEVLAKQARIMADAGCQCVYVVDSAGALILNAVSDRVSALVAELGDDAQVGFHGHENLGLGVANSVLAVEAGALQIDGSTRRFGAGAGNTPVEAFAAVTEKLGIRTGIDTLKIIDAAEDVVRPIMDGDCQLDRLSLMMGYAGVYSSFLKHADSHARRYGVSGAEILIEAGRRKLVGGQEDQLIEIALGLADRGPAGSAVAEKKSA.

The region spanning 9-261 (IRVTDSSLRD…RTGIDTLKII (253 aa)) is the Pyruvate carboxyltransferase domain. Position 17-18 (17-18 (RD)) interacts with substrate. Aspartate 18 contacts Mn(2+). The Proton acceptor role is filled by histidine 21. Residues serine 171 and histidine 200 each contribute to the substrate site. The Mn(2+) site is built by histidine 200 and histidine 202. Tyrosine 291 is a binding site for substrate.

The protein belongs to the 4-hydroxy-2-oxovalerate aldolase family.

The catalysed reaction is (S)-4-hydroxy-2-oxopentanoate = acetaldehyde + pyruvate. The protein is 4-hydroxy-2-oxovalerate aldolase 4 of Rhodococcus jostii (strain RHA1).